The sequence spans 512 residues: Histidine ammonia-lyase (512 aa).

The segment at residues 146–148 is a cross-link (5-imidazolinone (Ala-Gly)); the sequence is ASG. Position 147 is a 2,3-didehydroalanine (Ser) (S147).

It belongs to the PAL/histidase family. In terms of processing, contains an active site 4-methylidene-imidazol-5-one (MIO), which is formed autocatalytically by cyclization and dehydration of residues Ala-Ser-Gly.

It localises to the cytoplasm. It catalyses the reaction L-histidine = trans-urocanate + NH4(+). The protein operates within amino-acid degradation; L-histidine degradation into L-glutamate; N-formimidoyl-L-glutamate from L-histidine: step 1/3. The chain is Histidine ammonia-lyase from Paracidovorax citrulli (strain AAC00-1) (Acidovorax citrulli).